A 977-amino-acid polypeptide reads, in one-letter code: uncharacterized protein (977 aa).

Residues 1–24 form the signal peptide; sequence MQSNLLKVLGVLAIVATLVCFIFA. A disordered region spans residues 125–146; the sequence is TESTRPGKSNLDDKGNMIPIPR. Transmembrane regions (helical) follow at residues 612-632, 722-742, 754-774, 796-816, 833-853, and 866-886; these read IKAI…LGFA, LGLS…IVII, AFMA…FLLF, VVMM…LDFV, FIGT…INWF, and GVNM…YGYV. Positions 918-977 are disordered; it reads KALSPIGMDDKTRQGITGRAEARLKQRNKTLDQAEKNRKNTPKEGGEKTNAEPPQPEARG. Residues 937–967 show a composition bias toward basic and acidic residues; it reads AEARLKQRNKTLDQAEKNRKNTPKEGGEKTN.

Belongs to the TrbL/VirB6 family.

It is found in the cell membrane. This is an uncharacterized protein from Rickettsia felis (strain ATCC VR-1525 / URRWXCal2) (Rickettsia azadi).